The primary structure comprises 196 residues: Heat shock protein beta-8 (196 aa).

The disordered stretch occupies residues Met1 to Ser28. Ser24 and Ser57 each carry phosphoserine. At Thr63 the chain carries Phosphothreonine. Arg71 and Arg78 each carry asymmetric dimethylarginine. The sHSP domain maps to Thr74–Glu185. Positions Pro176–Ser196 are disordered. Residues Gly178–Ser196 are compositionally biased toward polar residues.

The protein belongs to the small heat shock protein (HSP20) family. Monomer. Forms a ternary complex with BAG3 and HSPA1A. Component of the chaperone-assisted selective autophagy (CASA) complex consisting of BAG3, HSPA8/HSC70, HSPB8 and STUB1/CHIP. Interacts with HSPB1. Interacts with DNAJB6. Interacts with BAG3. In terms of processing, phosphorylated.

The protein localises to the cytoplasm. It is found in the nucleus. In terms of biological role, involved in the chaperone-assisted selective autophagy (CASA), a crucial process for protein quality control, particularly in mechanical strained cells and tissues such as muscle. Displays temperature-dependent chaperone activity. The protein is Heat shock protein beta-8 (Hspb8) of Rattus norvegicus (Rat).